A 267-amino-acid polypeptide reads, in one-letter code: tRNA pseudouridine synthase A (267 aa).

Asp-55 functions as the Nucleophile in the catalytic mechanism. Residue Tyr-111 coordinates substrate.

The protein belongs to the tRNA pseudouridine synthase TruA family.

It carries out the reaction uridine(38/39/40) in tRNA = pseudouridine(38/39/40) in tRNA. In terms of biological role, formation of pseudouridine at positions 38, 39 and 40 in the anticodon stem and loop of transfer RNAs. This Thermococcus onnurineus (strain NA1) protein is tRNA pseudouridine synthase A.